A 552-amino-acid chain; its full sequence is 2-methyl-1,2-propanediol dehydrogenase (552 aa).

This sequence belongs to the GMC oxidoreductase family. FAD serves as cofactor.

It is found in the cytoplasm. It carries out the reaction 2-methylpropane-1,2-diol + NAD(+) = 2-hydroxy-2-methylpropanal + NADH + H(+). Involved in the degradation of methyl tert-butyl ether (MTBE). Catalyzes the conversion of 2-methyl 1,2-propanediol (2-M1,2-PD) to hydroxyisobutyraldehyde. The sequence is that of 2-methyl-1,2-propanediol dehydrogenase from Mycolicibacterium austroafricanum (Mycobacterium austroafricanum).